The sequence spans 942 residues: NBPF family member NBPF8 (942 aa).

A coiled-coil region spans residues alanine 89–leucine 130. The tract at residues lysine 161–serine 203 is disordered. The segment covering glutamate 165–glutamate 180 has biased composition (acidic residues). The region spanning glutamate 165 to serine 259 is the Olduvai 1 domain. A compositionally biased stretch (basic and acidic residues) spans glutamate 190–glutamate 201. The stretch at lysine 339–leucine 401 forms a coiled coil. Olduvai domains follow at residues glutamate 436–proline 528, glutamate 529–proline 617, serine 620–aspartate 675, glutamate 676–proline 767, serine 770–lysine 843, and lysine 844–phenylalanine 904. Disordered stretches follow at residues glutamate 451–serine 474 and proline 528–serine 566. Acidic residues-rich tracts occupy residues asparagine 530–glutamate 539 and glutamate 550–aspartate 562. The segment covering glycine 831–arginine 849 has biased composition (basic residues). A disordered region spans residues glycine 831–leucine 863.

It belongs to the NBPF family. As to expression, expressed in the mammary gland.

It localises to the cytoplasm. In Homo sapiens (Human), this protein is NBPF family member NBPF8.